Here is a 246-residue protein sequence, read N- to C-terminus: MWIGVISLFPEMFRAITDYGVTGRAVKNGLLSVQCWSPRDFTYDRHRTVDDRPYGGGPGMLMMVQPLREAIHAAKAAAGEGAKVIYLSPQGRKLDQQGVCELATNQKMILVCGRYEGVDERVIKTEIDEEWSIGDYVLSGGELPAMTLIDSVSRFIPGVLGHQASAEEDSFVDGLLDCPHYTRPEVLEGMEVPPVLLSGNHAEIRRWRLKQSLGRTWLRRPELLESLALTDEQMVLLAEFQREHKP.

S-adenosyl-L-methionine is bound by residues glycine 113 and 133–138; that span reads IGDYVL.

It belongs to the RNA methyltransferase TrmD family. Homodimer.

It localises to the cytoplasm. It catalyses the reaction guanosine(37) in tRNA + S-adenosyl-L-methionine = N(1)-methylguanosine(37) in tRNA + S-adenosyl-L-homocysteine + H(+). Specifically methylates guanosine-37 in various tRNAs. The chain is tRNA (guanine-N(1)-)-methyltransferase from Yersinia enterocolitica serotype O:8 / biotype 1B (strain NCTC 13174 / 8081).